Consider the following 396-residue polypeptide: Elongation factor Tu (396 aa).

A tr-type G domain is found at 10–205; it reads KSHANIGTIG…AVDEYIPTPE (196 aa). The tract at residues 19-26 is G1; sequence GHVDHGKT. Position 19-26 (19-26) interacts with GTP; that stretch reads GHVDHGKT. A Mg(2+)-binding site is contributed by T26. The interval 61–65 is G2; sequence GITIS. The tract at residues 82–85 is G3; the sequence is DCPG. GTP-binding positions include 82–86 and 137–140; these read DCPGH and NKCD. The interval 137-140 is G4; that stretch reads NKCD. The segment at 175–177 is G5; that stretch reads SAL.

This sequence belongs to the TRAFAC class translation factor GTPase superfamily. Classic translation factor GTPase family. EF-Tu/EF-1A subfamily. In terms of assembly, monomer.

It is found in the cytoplasm. It catalyses the reaction GTP + H2O = GDP + phosphate + H(+). GTP hydrolase that promotes the GTP-dependent binding of aminoacyl-tRNA to the A-site of ribosomes during protein biosynthesis. This chain is Elongation factor Tu, found in Bacillus pumilus (strain SAFR-032).